Consider the following 213-residue polypeptide: Nicolin-1 (213 aa).

Part of the neuronal tubulin polyglutamylase complex which contains TPGS1, TPGS2, TTLL1, LRRC49 and NICN1. In terms of tissue distribution, high expression level is found in brain, testis, liver and kidney. Weak expression in spleen, leukocytes, small intestine and colon.

It is found in the nucleus. The sequence is that of Nicolin-1 (NICN1) from Homo sapiens (Human).